Here is a 162-residue protein sequence, read N- to C-terminus: uncharacterized protein (162 aa).

A helical transmembrane segment spans residues 7-27; sequence LGGVMLFAIVSLMVCGCMVVF.

Its subcellular location is the membrane. This is an uncharacterized protein from Methanocaldococcus jannaschii (strain ATCC 43067 / DSM 2661 / JAL-1 / JCM 10045 / NBRC 100440) (Methanococcus jannaschii).